A 415-amino-acid polypeptide reads, in one-letter code: Mitogen-activated protein kinase kinae MST7 (415 aa).

The disordered stretch occupies residues 1 to 37; that stretch reads MADPFAPRTMKRRNVKGLALTPAAPKPPPTAENAPIH. The region spanning 61 to 326 is the Protein kinase domain; the sequence is LEVIKDLGSG…EELFERDPFV (266 aa). Residues 67–75 and Lys90 each bind ATP; that span reads LGSGNGGTV. The segment at 363-409 is disordered; the sequence is DLLRSSDSPTATYHGDDRPLETPTSAYRVDPRRGPAEGSAGLADQVD.

This sequence belongs to the protein kinase superfamily. STE Ser/Thr protein kinase family. MAP kinase kinase subfamily. In terms of assembly, homodimer. Interacts with the adapter protein MST50. Interacts with TRX2.

The enzyme catalyses L-seryl-[protein] + ATP = O-phospho-L-seryl-[protein] + ADP + H(+). It catalyses the reaction L-threonyl-[protein] + ATP = O-phospho-L-threonyl-[protein] + ADP + H(+). Its function is as follows. Mitogen-activated protein kinase kinase; part of the MST11-MST7-PMK1 MAP kinase (MAPK) cascade that is essential for appressorium formation, penetration and invasive growth. The MST11-MST7-PMK1 MAP kinase cascade transduces signals from the cell surface sensors MDB2 and SHO1 that recognize various surface signals such as surface hydrophobicity, cutin monomers, and rice leaf waxes. MST7 acts as the upstream MAPKK that directly phosphorylates MAP kinase PMK1. In Pyricularia oryzae (strain 70-15 / ATCC MYA-4617 / FGSC 8958) (Rice blast fungus), this protein is Mitogen-activated protein kinase kinae MST7.